Reading from the N-terminus, the 464-residue chain is Protein FAM90A13 (464 aa).

Disordered regions lie at residues 1 to 42, 69 to 389, and 411 to 437; these read MMAR…DPRL, VPAT…HDGA, and APSF…SEAP. 2 stretches are compositionally biased toward basic and acidic residues: residues 74–89 and 97–114; these read GKKE…KPRG and NKDK…DPQR. Residues 180–197 are compositionally biased toward low complexity; it reads LASLSPLRKASLSSSSSL.

Belongs to the FAM90 family.

This Homo sapiens (Human) protein is Protein FAM90A13.